The chain runs to 175 residues: Macro domain-containing protein TTE0995 (175 aa).

The Macro domain occupies 1–174 (MKEKIKLIKG…VYSKAYEELD (174 aa)).

The protein belongs to the MacroD-type family.

The sequence is that of Macro domain-containing protein TTE0995 from Caldanaerobacter subterraneus subsp. tengcongensis (strain DSM 15242 / JCM 11007 / NBRC 100824 / MB4) (Thermoanaerobacter tengcongensis).